Here is a 173-residue protein sequence, read N- to C-terminus: Alpha-crystallin A chain (173 aa).

At Met1 the chain carries N-acetylmethionine. Residues 52-162 enclose the sHSP domain; that stretch reads LFRTVLESGI…SHNERPIPVS (111 aa). His100, Glu102, His107, and His154 together coordinate Zn(2+). The disordered stretch occupies residues 144-173; that stretch reads PKVQSNTDPSHNERPIPVSREEKPTSAPPS. Over residues 153 to 167 the composition is skewed to basic and acidic residues; that stretch reads SHNERPIPVSREEKP. Residue Ser162 is glycosylated (O-linked (GlcNAc) serine).

Belongs to the small heat shock protein (HSP20) family. As to quaternary structure, heteropolymer composed of three CRYAA and one CRYAB subunits. Inter-subunit bridging via zinc ions enhances stability, which is crucial as there is no protein turn over in the lens. Can also form homodimers and homotetramers (dimers of dimers) which serve as the building blocks of homooligomers. Within homooligomers, the zinc-binding motif is created from residues of 3 different molecules. His-100 and Glu-102 from one molecule are ligands of the zinc ion, and His-107 and His-154 residues from additional molecules complete the site with tetrahedral coordination geometry.

The protein localises to the cytoplasm. It is found in the nucleus. In terms of biological role, contributes to the transparency and refractive index of the lens. May act as a chaperone, preventing aggregation of various proteins under a wide range of stress conditions. This chain is Alpha-crystallin A chain (CRYAA), found in Tupinambis teguixin (Golden tegu).